Here is a 100-residue protein sequence, read N- to C-terminus: Aspartyl/glutamyl-tRNA(Asn/Gln) amidotransferase subunit C (100 aa).

Belongs to the GatC family. In terms of assembly, heterotrimer of A, B and C subunits.

The catalysed reaction is L-glutamyl-tRNA(Gln) + L-glutamine + ATP + H2O = L-glutaminyl-tRNA(Gln) + L-glutamate + ADP + phosphate + H(+). It carries out the reaction L-aspartyl-tRNA(Asn) + L-glutamine + ATP + H2O = L-asparaginyl-tRNA(Asn) + L-glutamate + ADP + phosphate + 2 H(+). Functionally, allows the formation of correctly charged Asn-tRNA(Asn) or Gln-tRNA(Gln) through the transamidation of misacylated Asp-tRNA(Asn) or Glu-tRNA(Gln) in organisms which lack either or both of asparaginyl-tRNA or glutaminyl-tRNA synthetases. The reaction takes place in the presence of glutamine and ATP through an activated phospho-Asp-tRNA(Asn) or phospho-Glu-tRNA(Gln). This Streptococcus pyogenes serotype M49 (strain NZ131) protein is Aspartyl/glutamyl-tRNA(Asn/Gln) amidotransferase subunit C.